Reading from the N-terminus, the 196-residue chain is DnaA initiator-associating protein DiaA (196 aa).

One can recognise an SIS domain in the interval L34–D196.

It belongs to the SIS family. DiaA subfamily. As to quaternary structure, homotetramer; dimer of dimers.

Its function is as follows. Required for the timely initiation of chromosomal replication via direct interactions with the DnaA initiator protein. This Yersinia enterocolitica serotype O:8 / biotype 1B (strain NCTC 13174 / 8081) protein is DnaA initiator-associating protein DiaA.